A 410-amino-acid polypeptide reads, in one-letter code: Peptidase T (410 aa).

His77 is a binding site for Zn(2+). The active site involves Asp79. Asp140 provides a ligand contact to Zn(2+). Glu174 acts as the Proton acceptor in catalysis. Zn(2+) contacts are provided by Glu175, Asp197, and His379.

It belongs to the peptidase M20B family. It depends on Zn(2+) as a cofactor.

The protein localises to the cytoplasm. The catalysed reaction is Release of the N-terminal residue from a tripeptide.. Functionally, cleaves the N-terminal amino acid of tripeptides. This Desulfitobacterium hafniense (strain Y51) protein is Peptidase T.